The sequence spans 301 residues: Putative F-box/LRR-repeat protein 19 (301 aa).

In terms of domain architecture, F-box spans 18–66 (PDWSELTRECLLDIFSRLSQEQRWIGPMLVSKNWMNACYDPTLNTIFDL). LRR repeat units lie at residues 108 to 133 (IRHC…WIKN), 134 to 159 (CPNV…DISY), 160 to 185 (SYGI…KRNL), 231 to 256 (YSTL…DLRG), and 257 to 282 (CISL…IKPD).

In Arabidopsis thaliana (Mouse-ear cress), this protein is Putative F-box/LRR-repeat protein 19 (FBL19).